A 468-amino-acid polypeptide reads, in one-letter code: Nuclear pore complex protein Nup50 (468 aa).

The segment covering 1–16 (MAKRNAEKELTDRNWD) has biased composition (basic and acidic residues). The disordered stretch occupies residues 1-26 (MAKRNAEKELTDRNWDQEDEAEEVGT). Ala2 is subject to N-acetylalanine. N6-acetyllysine is present on Lys8. At Ser52 the chain carries Phosphoserine. Residues 76–77 (FG) form repeat 1. The segment at 76-304 (FGSGAGGKPL…FSPGNSSLFG (229 aa)) is 5 X 2 AA repeats of F-G. Lys83 is subject to N6-acetyllysine. Repeat unit 2 spans residues 113 to 114 (FG). 2 disordered regions span residues 122 to 148 (TTLVDKVSNPKTNGDSQQPSSSGLASS) and 201 to 224 (HGNSGRNSESESNKVAAETQSPSL). Lys127 bears the N6-acetyllysine mark. The span at 137–148 (SQQPSSSGLASS) shows a compositional bias: low complexity. The tract at residues 144–206 (GLASSKACVG…IEQQHGNSGR (63 aa)) is binding to CDKN1B. Phosphoserine is present on residues Ser208 and Ser221. The stretch at 225-226 (FG) is repeat 3. A Phosphoserine modification is found at Ser234. The segment at 238–269 (FHGNKTEDTPDKKMEVASEKKTDPSSLGATSA) is disordered. Over residues 241–260 (NKTEDTPDKKMEVASEKKTD) the composition is skewed to basic and acidic residues. 2 positions are modified to phosphothreonine: Thr246 and Thr259. Ser270 carries the phosphoserine modification. Residues 273-274 (FG) form repeat 4. Ser296 is modified (phosphoserine). Copy 5 of the repeat occupies 303-304 (FG). Residues 304–317 (GKDTTQSKPVSSPF) show a composition bias toward polar residues. A disordered region spans residues 304-345 (GKDTTQSKPVSSPFPTKPLEGQAEGDSGECKGGDEEENDEPP). The region spanning 335 to 468 (GGDEEENDEP…HKILLEKKDA (134 aa)) is the RanBD1 domain. A Glycyl lysine isopeptide (Lys-Gly) (interchain with G-Cter in SUMO2) cross-link involves residue Lys353. Position 450 is an N6-acetyllysine (Lys450).

As to quaternary structure, interacts with Importin alpha-2, Importin beta, Importin beta-2, NUP153, Ran binding protein 7, CDKN1B and itself. Does not interact with TPR. In terms of tissue distribution, ubiquitous. Highest levels in testis, peripheral blood leukocytes and fetal liver.

It is found in the nucleus. The protein resides in the nuclear pore complex. It localises to the nucleus membrane. Functionally, component of the nuclear pore complex that has a direct role in nuclear protein import. Actively displaces NLSs from importin-alpha, and facilitates disassembly of the importin-alpha:beta-cargo complex and importin recycling. Interacts with regulatory proteins of cell cycle progression including CDKN1B. This interaction is required for correct intracellular transport and degradation of CDKN1B. The chain is Nuclear pore complex protein Nup50 (NUP50) from Homo sapiens (Human).